The primary structure comprises 96 residues: Small ribosomal subunit protein bS6 (96 aa).

The protein belongs to the bacterial ribosomal protein bS6 family.

In terms of biological role, binds together with bS18 to 16S ribosomal RNA. This chain is Small ribosomal subunit protein bS6, found in Streptococcus mutans serotype c (strain ATCC 700610 / UA159).